The primary structure comprises 347 residues: N-acetyl-gamma-glutamyl-phosphate reductase (347 aa).

Cys151 is a catalytic residue.

The protein belongs to the NAGSA dehydrogenase family. Type 1 subfamily.

The protein localises to the cytoplasm. The enzyme catalyses N-acetyl-L-glutamate 5-semialdehyde + phosphate + NADP(+) = N-acetyl-L-glutamyl 5-phosphate + NADPH + H(+). It functions in the pathway amino-acid biosynthesis; L-arginine biosynthesis; N(2)-acetyl-L-ornithine from L-glutamate: step 3/4. Catalyzes the NADPH-dependent reduction of N-acetyl-5-glutamyl phosphate to yield N-acetyl-L-glutamate 5-semialdehyde. In Corynebacterium aurimucosum (strain ATCC 700975 / DSM 44827 / CIP 107346 / CN-1) (Corynebacterium nigricans), this protein is N-acetyl-gamma-glutamyl-phosphate reductase.